Reading from the N-terminus, the 535-residue chain is Dipeptide-binding protein (535 aa).

The first 28 residues, 1–28, serve as a signal peptide directing secretion; sequence MRISLKKSGMLKLGLSLVAMTVAASVQA. C34 and C262 form a disulfide bridge. Glycyl-L-leucine contacts are provided by residues 48–50, 383–385, and 433–436; these read TSG, RPY, and WTGD. Cysteines 450 and 463 form a disulfide.

The protein belongs to the bacterial solute-binding protein 5 family. In terms of assembly, the complex is composed of two ATP-binding proteins (DppD and DppF), two transmembrane proteins (DppB and DppC) and a solute-binding protein (DppA).

It is found in the periplasm. Its activity is regulated as follows. Heme binding is inhibited by dipeptide. Functionally, part of the ABC transporter DppABCDF involved in dipeptide transport. Binds dipeptides and accepts a wide range of side chains, including small neutral, bulky hydrophobic, and positively and negatively charged groups. Tripeptides are poor substrates. DppA alone controls the specificity of the Dpp transporter. In addition, plays a role in chemotaxis toward peptides via interaction with the chemotaxis protein Tap. Its function is as follows. Binds heme. When a foreign outer membrane heme receptor is expressed in E.coli, DppABCDF can also transport heme and its precursor, 5-aminolevulinic acid (ALA), from the periplasm into the cytoplasm. The protein is Dipeptide-binding protein of Escherichia coli (strain K12).